A 266-amino-acid chain; its full sequence is uncharacterized protein (266 aa).

The next 8 helical transmembrane spans lie at 9–29 (IAAL…LFIF), 37–57 (TMPH…LVFY), 69–89 (LIKV…ISLL), 123–143 (FLLM…MIFT), 153–173 (YNPF…LVIA), 184–204 (LPLA…LFLL), 216–236 (SVFA…ILIL), and 246–266 (TNSL…MVFV).

It is found in the cell membrane. This is an uncharacterized protein from Haemophilus influenzae (strain ATCC 51907 / DSM 11121 / KW20 / Rd).